The sequence spans 249 residues: Aquaporin SIP2-1 (249 aa).

A run of 2 helical transmembrane segments spans residues 12 to 32 (PWLVVGDLALAAAWVCAGALV) and 53 to 73 (VSLSLVYMFLFAWLEAASGGA). The NPA 1 motif lies at 76–78 (NPL). 4 consecutive transmembrane segments (helical) span residues 104 to 124 (AQVIGAVLGVKLIQVTFPNVG), 133 to 155 (AHHGALAEGLATFMVVMVSVTLK), 176 to 196 (IHLLSSDITGGIMNPASAFAW), and 210 to 230 (LVYWLAPLQATLLGVWAVTFF). The NPA 2 motif lies at 189–191 (NPA).

The protein belongs to the MIP/aquaporin (TC 1.A.8) family. SIP (TC 1.A.8.10) subfamily.

The protein resides in the membrane. Aquaporins facilitate the transport of water and small neutral solutes across cell membranes. The protein is Aquaporin SIP2-1 (SIP2-1) of Zea mays (Maize).